Reading from the N-terminus, the 636-residue chain is Receptor-like kinase LIP1 (636 aa).

The interval 18–57 (NAPCTTNETNDDNVEHDEFRPPVVATTKRTEEREPAEQQP) is disordered. The Protein kinase domain maps to 74–352 (FRQECLLGEG…SDVMVALSFL (279 aa)). ATP is bound by residues 80-88 (LGEGGFGRV) and Lys-103. The active-site Proton acceptor is the Asp-201. Phosphoserine occurs at positions 205 and 236. Position 242 is a phosphothreonine (Thr-242). Tyr-250 carries the post-translational modification Phosphotyrosine. The segment at 389-636 (FCISRKDVGN…EEEHISSDHD (248 aa)) is disordered. Residues 403–434 (SSDSEDEEEEKEQKAEKEEESTSKKRQEQEET) are a coiled coil. Positions 413 to 431 (KEQKAEKEEESTSKKRQEQ) are enriched in basic and acidic residues. Over residues 432–455 (EETATDSDDESDSNSEKDQEEEQS) the composition is skewed to acidic residues. A compositionally biased stretch (polar residues) spans 480-489 (TNATAQSLKI). Composition is skewed to basic and acidic residues over residues 522-531 (DSGRDHDDSS) and 554-566 (HETR…DDSP). Over residues 567-576 (RNTSMRINSL) the composition is skewed to polar residues. Composition is skewed to basic and acidic residues over residues 588 to 603 (NHQT…KSED) and 619 to 636 (SLHR…SDHD).

Belongs to the protein kinase superfamily. Ser/Thr protein kinase family. In terms of assembly, interacts with PRK6. Palmitoylated. As to expression, expressed in mature pollen and in germinating pollen tubes.

It localises to the cell membrane. Its subcellular location is the cytoplasm. Involved in pollen tube guidance into micropyle. Participates in perception of the ovule-secreted peptide signal LURE1. This chain is Receptor-like kinase LIP1, found in Arabidopsis thaliana (Mouse-ear cress).